The following is a 96-amino-acid chain: Small ribosomal subunit protein bS18 (96 aa).

Belongs to the bacterial ribosomal protein bS18 family. Part of the 30S ribosomal subunit. Forms a tight heterodimer with protein bS6.

In terms of biological role, binds as a heterodimer with protein bS6 to the central domain of the 16S rRNA, where it helps stabilize the platform of the 30S subunit. In Borreliella afzelii (strain PKo) (Borrelia afzelii), this protein is Small ribosomal subunit protein bS18.